The sequence spans 421 residues: ATP-dependent RNA helicase RhlB (421 aa).

The short motif at 9 to 37 is the Q motif element; sequence QKFSDFALHPQVVEALEKKGFYNCTPIQA. The Helicase ATP-binding domain maps to 40–219; it reads LPLTLAGRDV…FEQMNNAEYV (180 aa). Residue 53-60 coordinates ATP; sequence AQTGTGKT. Positions 165 to 168 match the DEAD box motif; the sequence is DEAD. The region spanning 245–390 is the Helicase C-terminal domain; the sequence is RLLQTLIEEE…VSKYNPEALM (146 aa). The segment at 396–421 is disordered; sequence PLRLTRSRPGNGPRRAGAPRNRRRSG. Low complexity predominate over residues 402–414; it reads SRPGNGPRRAGAP.

This sequence belongs to the DEAD box helicase family. RhlB subfamily. Component of the RNA degradosome, which is a multiprotein complex involved in RNA processing and mRNA degradation.

Its subcellular location is the cytoplasm. The enzyme catalyses ATP + H2O = ADP + phosphate + H(+). In terms of biological role, DEAD-box RNA helicase involved in RNA degradation. Has RNA-dependent ATPase activity and unwinds double-stranded RNA. In Salmonella agona (strain SL483), this protein is ATP-dependent RNA helicase RhlB.